A 201-amino-acid chain; its full sequence is Recombination protein RecR (201 aa).

The C4-type zinc finger occupies 60–75; sequence CSVCGNVDTSDPCTIC. The Toprim domain maps to 83–178; sequence ATLIVVEDVS…RVTKLAHGVP (96 aa).

This sequence belongs to the RecR family.

May play a role in DNA repair. It seems to be involved in an RecBC-independent recombinational process of DNA repair. It may act with RecF and RecO. The protein is Recombination protein RecR of Chelativorans sp. (strain BNC1).